We begin with the raw amino-acid sequence, 189 residues long: Ion-translocating oxidoreductase complex subunit B (189 aa).

The tract at residues 1–26 is hydrophobic; it reads MSAIVIAIVVLTILALVFGVLLGFAA. Residues 32–90 enclose the 4Fe-4S domain; the sequence is EGNPLTDQIEALLPQTQCGQCGYPGCRPYAEAIANGDKVNKCPPGGAATMEKLADLMGV. Positions 49, 52, 57, 73, 114, 117, 120, 124, 144, 147, 150, and 154 each coordinate [4Fe-4S] cluster. 4Fe-4S ferredoxin-type domains follow at residues 105 to 134 and 135 to 164; these read KVAY…GSGK and LMHT…MLPV.

The protein belongs to the 4Fe4S bacterial-type ferredoxin family. RnfB subfamily. The complex is composed of six subunits: RnfA, RnfB, RnfC, RnfD, RnfE and RnfG. It depends on [4Fe-4S] cluster as a cofactor.

The protein localises to the cell inner membrane. Its function is as follows. Part of a membrane-bound complex that couples electron transfer with translocation of ions across the membrane. The sequence is that of Ion-translocating oxidoreductase complex subunit B from Shewanella pealeana (strain ATCC 700345 / ANG-SQ1).